A 312-amino-acid polypeptide reads, in one-letter code: Putative 1-aminocyclopropane-1-carboxylate deaminase (312 aa).

Lys-42 carries the post-translational modification N6-(pyridoxal phosphate)lysine.

It belongs to the ACC deaminase/D-cysteine desulfhydrase family. Requires pyridoxal 5'-phosphate as cofactor.

The catalysed reaction is 1-aminocyclopropane-1-carboxylate + H2O = 2-oxobutanoate + NH4(+). The polypeptide is Putative 1-aminocyclopropane-1-carboxylate deaminase (Thermotoga maritima (strain ATCC 43589 / DSM 3109 / JCM 10099 / NBRC 100826 / MSB8)).